Reading from the N-terminus, the 253-residue chain is Shikimate dehydrogenase (NADP(+)) (253 aa).

Residues 13-15 (SIS) and Thr59 contribute to the shikimate site. Catalysis depends on Lys63, which acts as the Proton acceptor. Glu74 lines the NADP(+) pocket. The shikimate site is built by Asn83 and Asp94. NADP(+)-binding positions include 115 to 119 (GAGGA), 139 to 144 (NRTIER), and Val199. Tyr201 is a shikimate binding site. An NADP(+)-binding site is contributed by Gly221.

It belongs to the shikimate dehydrogenase family. In terms of assembly, homodimer.

It carries out the reaction shikimate + NADP(+) = 3-dehydroshikimate + NADPH + H(+). It participates in metabolic intermediate biosynthesis; chorismate biosynthesis; chorismate from D-erythrose 4-phosphate and phosphoenolpyruvate: step 4/7. Involved in the biosynthesis of the chorismate, which leads to the biosynthesis of aromatic amino acids. Catalyzes the reversible NADPH linked reduction of 3-dehydroshikimate (DHSA) to yield shikimate (SA). This Thermotoga maritima (strain ATCC 43589 / DSM 3109 / JCM 10099 / NBRC 100826 / MSB8) protein is Shikimate dehydrogenase (NADP(+)).